Here is an 83-residue protein sequence, read N- to C-terminus: MKGQMIICLVLIALCMSVVVMAQNLRAEELEKANPKDERVRSFERNQKRACKDYLPKSECTQFRCRTSMKYKYTNCKKTCGTC.

The N-terminal stretch at 1–22 is a signal peptide; sequence MKGQMIICLVLIALCMSVVVMA. Residues 23–49 constitute a propeptide that is removed on maturation; that stretch reads QNLRAEELEKANPKDERVRSFERNQKR. A ShKT domain is found at 51 to 83; the sequence is CKDYLPKSECTQFRCRTSMKYKYTNCKKTCGTC. 3 cysteine pairs are disulfide-bonded: Cys51–Cys83, Cys60–Cys76, and Cys65–Cys80.

Belongs to the sea anemone type 1 potassium channel toxin family. Type 1a subfamily.

Its subcellular location is the secreted. The protein localises to the nematocyst. Specifically, dose-dependently and potently blocks the voltage-gated potassium channel Kv1.1/KCNA1 (Ki=1.6 pM). Moderately blocks potassium channel heterotetramers formed by 3 subunits of Kv1.1/KCNA1 and 1 subunit of Kv1.2/KCNA2 (Ki=56 nM) and weakly blocks those formed by 2 subunits of Kv1.1/KCNA1 and 2 subunits of Kv1.2/KCNA2 (Ki=14 nM). The sequence is that of Kappa-actitoxin-Aer3a from Anemonia erythraea (Sea anemone).